The primary structure comprises 182 residues: ATP synthase subunit delta (182 aa).

The protein belongs to the ATPase delta chain family. F-type ATPases have 2 components, F(1) - the catalytic core - and F(0) - the membrane proton channel. F(1) has five subunits: alpha(3), beta(3), gamma(1), delta(1), epsilon(1). F(0) has three main subunits: a(1), b(2) and c(10-14). The alpha and beta chains form an alternating ring which encloses part of the gamma chain. F(1) is attached to F(0) by a central stalk formed by the gamma and epsilon chains, while a peripheral stalk is formed by the delta and b chains.

It localises to the cell inner membrane. F(1)F(0) ATP synthase produces ATP from ADP in the presence of a proton or sodium gradient. F-type ATPases consist of two structural domains, F(1) containing the extramembraneous catalytic core and F(0) containing the membrane proton channel, linked together by a central stalk and a peripheral stalk. During catalysis, ATP synthesis in the catalytic domain of F(1) is coupled via a rotary mechanism of the central stalk subunits to proton translocation. Its function is as follows. This protein is part of the stalk that links CF(0) to CF(1). It either transmits conformational changes from CF(0) to CF(1) or is implicated in proton conduction. The chain is ATP synthase subunit delta from Sulfurihydrogenibium azorense (strain DSM 15241 / OCM 825 / Az-Fu1).